Consider the following 333-residue polypeptide: E3 ubiquitin-protein ligase MIR1 (333 aa).

Residues 1-60 (MEDEDVPVCWICNEELGNERFRACGCTGELENVHRSCLSTWLTISRNTACQICGVVYNTR) form an RING-CH-type zinc finger. Residues 1 to 82 (MEDEDVPVCW…PRLTYQEGLE (82 aa)) lie on the Cytoplasmic side of the membrane. Positions 9, 12, 24, 26, 34, 37, 50, and 53 each coordinate Zn(2+). A helical transmembrane segment spans residues 83 to 103 (LIVFIFIMTLGAAGLAAATWV). The Extracellular segment spans residues 104–121 (WLYIVGGHDPEIDHVAAA). A helical membrane pass occupies residues 122–142 (AYYVFFVFYQLFVVFGLGAFF). The Cytoplasmic segment spans residues 143 to 333 (HMMRHVGRAY…SAVSSALMFH (191 aa)). The interval 187 to 257 (GDNQDEEGPA…GRDDNVEPTA (71 aa)) is disordered. A compositionally biased stretch (low complexity) spans 195-221 (PAGAAPGDQNGPAGAAPGDQDGPADGA). Positions 235 to 252 (AGYKEAGEPTHNDGRDDN) are enriched in basic and acidic residues.

Binds human MHC-I and CD1D.

The protein localises to the host cell membrane. It is found in the host endoplasmic reticulum. It catalyses the reaction [E2 ubiquitin-conjugating enzyme]-S-ubiquitinyl-L-cysteine + [acceptor protein]-L-cysteine = [E2 ubiquitin-conjugating enzyme]-L-cysteine + [acceptor protein]-S-ubiquitinyl-L-cysteine.. Its pathway is protein modification; protein ubiquitination. Its function is as follows. Membrane-bound E3 ubiquitin ligase expressed during late stages of lytic replication to mediate polyubiquitination of various host membrane proteins related to the immune response. Promotes ubiquitination and subsequent degradation of host MHC-I and CD1D molecules, DC-SIGN and DC-SIGNR, presumably to prevent lysis of infected cells by cytotoxic T-lymphocytes. Binds target molecules through transmembrane interaction. E3 ubiquitin-protein ligases accept ubiquitin from specific E2 ubiquitin-conjugating enzymes, and then transfer it to target protein. The result of this ubiquitination is the enhancement of the endocytosis of the target chain and the delivery to the lysosome, where it is proteolytically destroyed. Induces ubiquitination not only on lysines, but also on cysteine residues. In Human herpesvirus 8 type P (isolate GK18) (HHV-8), this protein is E3 ubiquitin-protein ligase MIR1 (K3).